Here is a 1172-residue protein sequence, read N- to C-terminus: Pesticidal crystal protein Cry1Ha (1172 aa).

Belongs to the delta endotoxin family.

In terms of biological role, promotes colloidosmotic lysis by binding to the midgut epithelial cells of insects. This chain is Pesticidal crystal protein Cry1Ha (cry1Ha), found in Bacillus thuringiensis.